The following is a 292-amino-acid chain: Aquaporin PIP1-3/PIP1-4 (292 aa).

Positions Met1–Pro42 are disordered. Transmembrane regions (helical) follow at residues Ile61 to Val81 and Ile96 to His118. Residues Asn120–Ala122 carry the NPA 1 motif. Transmembrane regions (helical) follow at residues Ile139–Phe159, Gly181–Ala201, and Ile215–Ile235. The NPA 2 motif lies at Asn241–Ala243. Residues Ile263–Ile283 form a helical membrane-spanning segment.

The protein belongs to the MIP/aquaporin (TC 1.A.8) family. PIP (TC 1.A.8.11) subfamily.

The protein localises to the cell membrane. Functionally, aquaporins facilitate the transport of water and small neutral solutes across cell membranes. The protein is Aquaporin PIP1-3/PIP1-4 (PIP1-3) of Zea mays (Maize).